A 167-amino-acid polypeptide reads, in one-letter code: HTH-type transcriptional repressor IacR (167 aa).

The segment covering 1–10 has biased composition (polar residues); that stretch reads MSNAKNTSAA. The interval 1 to 25 is disordered; the sequence is MSNAKNTSAASPARKGHSHHDPASD. In terms of domain architecture, HTH marR-type spans 30-162; sequence EDFPFYWLAR…LNRMLEVVFH (133 aa). The H-T-H motif DNA-binding region spans 76 to 99; the sequence is ISEISTHAIAKLSTITKIVYRMKE.

Its activity is regulated as follows. Exposure to indole-3-acetic acid (IAA) probably relieves the repressor activity. Functionally, probably acts as a repressor of iacA expression. The chain is HTH-type transcriptional repressor IacR from Pseudomonas putida (Arthrobacter siderocapsulatus).